Consider the following 347-residue polypeptide: NADH-ubiquinone oxidoreductase chain 2 (347 aa).

The next 10 helical transmembrane spans lie at 13–33 (IILGTMIVMTSSHWLLVWIGF), 59–79 (YFLTQATASMLLMLAVVTNLL), 96–116 (AVMTLALVMKLGLSPFHFWVP), 122–142 (IPLSSGLVLLTWQKLAPLSVL), 149–169 (VSPTLLLTVSLMSIAVGGWGG), 178–198 (ILAYSSIAHMGWMTAVLAYNP), 201–221 (TLLNLTLYILMTTTTFLLFMF), 247–267 (IMLSLGGLPPLTGFLPKWMII), 274–294 (ESLLLPTLMAMMALLSLYFYM), and 323–343 (VPLLPPMITLFTLALPLAPAL).

The protein belongs to the complex I subunit 2 family. Core subunit of respiratory chain NADH dehydrogenase (Complex I) which is composed of 45 different subunits. Interacts with TMEM242.

The protein resides in the mitochondrion inner membrane. The catalysed reaction is a ubiquinone + NADH + 5 H(+)(in) = a ubiquinol + NAD(+) + 4 H(+)(out). In terms of biological role, core subunit of the mitochondrial membrane respiratory chain NADH dehydrogenase (Complex I) which catalyzes electron transfer from NADH through the respiratory chain, using ubiquinone as an electron acceptor. Essential for the catalytic activity and assembly of complex I. This Megaderma spasma (Lesser false vampire bat) protein is NADH-ubiquinone oxidoreductase chain 2.